The sequence spans 427 residues: Thyroid hormone receptor alpha-A (427 aa).

A compositionally biased stretch (basic and acidic residues) spans 1 to 11; it reads MENTEQEHNLP. The tract at residues 1-40 is disordered; it reads MENTEQEHNLPEGDETQWPNGVKRKRKNSQCSMNSTSDKS. Residues 1-56 are modulating; that stretch reads MENTEQEHNLPEGDETQWPNGVKRKRKNSQCSMNSTSDKSISVPGYVPSYLEKDEP. Over residues 29 to 40 the composition is skewed to polar residues; that stretch reads SQCSMNSTSDKS. NR C4-type zinc fingers lie at residues 57 to 77 and 95 to 119; these read CVVC…CEGC and CKYD…FRKC. Residues 57–131 constitute a DNA-binding region (nuclear receptor); that stretch reads CVVCGDKATG…VGMAMDLVLD (75 aa). The 244-residue stretch at 167–410 folds into the NR LBD domain; that stretch reads SEWELIRMVT…PPLFLEVFED (244 aa).

Belongs to the nuclear hormone receptor family. NR1 subfamily. In terms of assembly, interacts with ncoa2. As to expression, after the mid-blastula transition (MBT), expressed throughout the deep cells, which give rise to the embryo proper. In adults, isoform 2 shows highest expression in the eye and liver. Expressed in adult gonads.

Its subcellular location is the nucleus. In terms of biological role, high affinity receptor for triiodothyronine. In the absence of thyroid hormone during late blastula stage development, acts as a transcriptional repressor. Whereas in the presence of thyroid hormone, can act as an activator of transcription. In addition, represses retinoic acid (RA)-signaling during blastula and gastrula stages of development. The polypeptide is Thyroid hormone receptor alpha-A (thraa) (Danio rerio (Zebrafish)).